The primary structure comprises 88 residues: uncharacterized protein (88 aa).

This is an uncharacterized protein from Lymantria dispar multicapsid nuclear polyhedrosis virus (LdMNPV).